We begin with the raw amino-acid sequence, 1939 residues long: Myosin-1 (1939 aa).

The 50-residue stretch at 33–82 (DAKTSVFVAEPKESFVKGTVQSREGGKVTVKTEAGATLTVKEDQVFPMNP) folds into the Myosin N-terminal SH3-like domain. Phosphothreonine is present on residues Thr64 and Thr69. A Myosin motor domain is found at 86-782 (DKIEDMAMMT…LLGLLEEMRD (697 aa)). Lys130 carries the N6,N6,N6-trimethyllysine modification. 179–186 (GESGAGKT) contributes to the ATP binding site. Tyr389 is subject to Phosphotyrosine. Phosphoserine is present on Ser392. The residue at position 419 (Thr419) is a Phosphothreonine. Tyr424 is subject to Phosphotyrosine. A Phosphoserine modification is found at Ser625. The segment at 659–681 (LNKLMTNLRSTHPHFVRCIIPNE) is actin-binding. His757 carries the pros-methylhistidine modification. The segment at 761-775 (KFGHTKVFFKAGLLG) is actin-binding. An IQ domain is found at 785–814 (LAQLITRTQARCRGFLARVEYQKMVERRES). Residues 843–1939 (LLKSAETEKE…EVHTKIISEE (1097 aa)) adopt a coiled-coil conformation. Residues Ser1092 and Ser1096 each carry the phosphoserine modification. Disordered regions lie at residues 1125 to 1147 (EIEAERASRAKAEKQRSDLSREL) and 1153 to 1172 (RLEEAGGATSAQIEMNKKRE). Basic and acidic residues predominate over residues 1128–1147 (AERASRAKAEKQRSDLSREL). Residues Ser1162 and Ser1237 each carry the phosphoserine modification. Thr1241 carries the phosphothreonine modification. Phosphoserine is present on Ser1243. Residue Thr1255 is modified to Phosphothreonine. A Phosphoserine modification is found at Ser1261. 2 positions are modified to phosphothreonine: Thr1265 and Thr1286. Ser1288, Ser1292, Ser1303, and Ser1306 each carry phosphoserine. Position 1464 is a phosphotyrosine (Tyr1464). Position 1467 is a phosphothreonine (Thr1467). Ser1474 bears the Phosphoserine mark. Tyr1492 carries the post-translational modification Phosphotyrosine. Ser1495 is subject to Phosphoserine. The residue at position 1501 (Thr1501) is a Phosphothreonine. Phosphoserine is present on Ser1514. At Thr1517 the chain carries Phosphothreonine. Phosphoserine occurs at positions 1554, 1574, 1600, 1603, 1714, and 1726. 2 positions are modified to phosphothreonine: Thr1730 and Thr1736. Phosphoserine is present on Ser1739.

The protein belongs to the TRAFAC class myosin-kinesin ATPase superfamily. Myosin family. As to quaternary structure, muscle myosin is a hexameric protein that consists of 2 heavy chain subunits (MHC), 2 alkali light chain subunits (MLC) and 2 regulatory light chain subunits (MLC-2). Interacts with SLC26A5.

It is found in the cytoplasm. It localises to the myofibril. Required for normal hearing. It plays a role in cochlear amplification of auditory stimuli, likely through the positive regulation of prestin (SLC26A5) activity and outer hair cell (OHC) electromotility. This chain is Myosin-1 (MYH1), found in Canis lupus familiaris (Dog).